The chain runs to 354 residues: UDP-N-acetylglucosamine--N-acetylmuramyl-(pentapeptide) pyrophosphoryl-undecaprenol N-acetylglucosamine transferase (354 aa).

UDP-N-acetyl-alpha-D-glucosamine-binding positions include 15-17, Asn127, Arg163, Ser191, Ile244, 263-268, and Gln288; these read TGG and ALTVSE.

The protein belongs to the glycosyltransferase 28 family. MurG subfamily.

It is found in the cell inner membrane. The catalysed reaction is di-trans,octa-cis-undecaprenyl diphospho-N-acetyl-alpha-D-muramoyl-L-alanyl-D-glutamyl-meso-2,6-diaminopimeloyl-D-alanyl-D-alanine + UDP-N-acetyl-alpha-D-glucosamine = di-trans,octa-cis-undecaprenyl diphospho-[N-acetyl-alpha-D-glucosaminyl-(1-&gt;4)]-N-acetyl-alpha-D-muramoyl-L-alanyl-D-glutamyl-meso-2,6-diaminopimeloyl-D-alanyl-D-alanine + UDP + H(+). Its pathway is cell wall biogenesis; peptidoglycan biosynthesis. Its function is as follows. Cell wall formation. Catalyzes the transfer of a GlcNAc subunit on undecaprenyl-pyrophosphoryl-MurNAc-pentapeptide (lipid intermediate I) to form undecaprenyl-pyrophosphoryl-MurNAc-(pentapeptide)GlcNAc (lipid intermediate II). This chain is UDP-N-acetylglucosamine--N-acetylmuramyl-(pentapeptide) pyrophosphoryl-undecaprenol N-acetylglucosamine transferase, found in Serratia proteamaculans (strain 568).